A 385-amino-acid polypeptide reads, in one-letter code: Putative type I restriction enzyme specificity subunit S.HindORF215P (385 aa).

This sequence belongs to the type-I restriction system S methylase family.

In terms of biological role, a putative specificity subunit for a type I restriction enzyme; the corresponding endonuclease and methylase subunits have multiple frameshifts and are probably not expressed. This is Putative type I restriction enzyme specificity subunit S.HindORF215P from Haemophilus influenzae (strain ATCC 51907 / DSM 11121 / KW20 / Rd).